Reading from the N-terminus, the 247-residue chain is 14-3-3 protein gamma (247 aa).

An N-acetylmethionine modification is found at M1. V2 is subject to N-acetylvaline; in 14-3-3 protein gamma, N-terminally processed. Residues 2–247 (VDREQLVQKA…QDDDGGEGNN (246 aa)) form an interaction with SPATA18/MIEAP region. S71 is modified (phosphoserine). At Y133 the chain carries Phosphotyrosine. Residue T145 is modified to Phosphothreonine. The residue at position 215 (S215) is a Phosphoserine. Phosphothreonine is present on T234. Position 235 is a phosphoserine (S235).

Belongs to the 14-3-3 family. In terms of assembly, homodimer. Part of a complex that contains DSG3, PKP1, YAP1 and YWHAG; the complex is required for localization of DSG3 and YAP1 to the cell membrane in keratinocytes. Interacts with SAMSN1. Interacts with RAF1, SSH1 and CRTC2/TORC2. Interacts with ABL1 (phosphorylated form); the interaction retains it in the cytoplasm. Interacts with GAB2. Interacts with MDM4 (phosphorylated); negatively regulates MDM4 activity toward TP53. Interacts with PKA-phosphorylated AANAT and SIRT2. Interacts with the 'Thr-369' phosphorylated form of DAPK2. Interacts with PI4KB, TBC1D22A and TBC1D22B. Interacts with SLITRK1. Interacts with LRRK2; this interaction is dependent on LRRK2 phosphorylation. Interacts with MARK2 and MARK3. Interacts with MEFV. Interacts with ENDOG, TSC2 and PIK3C3; interaction with ENDOG weakens its interaction with TSC2 and PIK3C3. Interacts with (phosphorylated) WDR24. Interacts with BEST1; this interaction promotes L-glutamate channel activity leading to the positive regulation of NMDA glutamate receptor activity through the L-glutamate secretion. Interacts with PKP1 (when phosphorylated); the interaction results in translocation of PKP1 to the cytoplasm and loss of intercellular adhesion in keratinocytes. Interacts with SPATA18/MIEAP; a protein that also plays a role in MALM. Phosphorylated by various PKC isozymes.

It localises to the cytoplasm. The protein resides in the cytosol. Its subcellular location is the mitochondrion matrix. Adapter protein implicated in the regulation of a large spectrum of both general and specialized signaling pathways. Binds to a large number of partners, usually by recognition of a phosphoserine or phosphothreonine motif. Binding generally results in the modulation of the activity of the binding partner. Promotes inactivation of WDR24 component of the GATOR2 complex by binding to phosphorylated WDR24. Participates in the positive regulation of NMDA glutamate receptor activity by promoting the L-glutamate secretion through interaction with BEST1. Reduces keratinocyte intercellular adhesion, via interacting with PKP1 and sequestering it in the cytoplasm, thereby reducing its incorporation into desmosomes. Plays a role in mitochondrial protein catabolic process (also named MALM) that promotes the degradation of damaged proteins inside mitochondria. This is 14-3-3 protein gamma from Bos taurus (Bovine).